We begin with the raw amino-acid sequence, 862 residues long: DNA mismatch repair protein MutS (862 aa).

608 to 615 is a binding site for ATP; it reads GPNMAGKS.

It belongs to the DNA mismatch repair MutS family.

This protein is involved in the repair of mismatches in DNA. It is possible that it carries out the mismatch recognition step. This protein has a weak ATPase activity. This is DNA mismatch repair protein MutS from Borrelia garinii subsp. bavariensis (strain ATCC BAA-2496 / DSM 23469 / PBi) (Borreliella bavariensis).